Here is a 202-residue protein sequence, read N- to C-terminus: ATP-dependent Clp protease proteolytic subunit (202 aa).

The active-site Nucleophile is the S98. H123 is an active-site residue.

It belongs to the peptidase S14 family. Fourteen ClpP subunits assemble into 2 heptameric rings which stack back to back to give a disk-like structure with a central cavity, resembling the structure of eukaryotic proteasomes.

It localises to the cytoplasm. The enzyme catalyses Hydrolysis of proteins to small peptides in the presence of ATP and magnesium. alpha-casein is the usual test substrate. In the absence of ATP, only oligopeptides shorter than five residues are hydrolyzed (such as succinyl-Leu-Tyr-|-NHMec, and Leu-Tyr-Leu-|-Tyr-Trp, in which cleavage of the -Tyr-|-Leu- and -Tyr-|-Trp bonds also occurs).. Its function is as follows. Cleaves peptides in various proteins in a process that requires ATP hydrolysis. Has a chymotrypsin-like activity. Plays a major role in the degradation of misfolded proteins. The sequence is that of ATP-dependent Clp protease proteolytic subunit from Syntrophobacter fumaroxidans (strain DSM 10017 / MPOB).